The sequence spans 463 residues: Perilipin-5 (463 aa).

The interaction with LIPE stretch occupies residues 1 to 108; it reads MSEEEAAQIP…KLEEKLPFLQ (108 aa). The essential for lipid droplet targeting stretch occupies residues 1-173; it reads MSEEEAAQIP…HFLPMTEEEL (173 aa). Phosphoserine occurs at positions 2, 148, and 322. Residues 185–463 are interaction with PNPLA2 and ABHD5; that stretch reads VGSVEDQRRQ…KHTLMPELDF (279 aa). The segment at 444–463 is recruits mitochondria at the lipid droplet surface; it reads QEPETPSCPVKHTLMPELDF.

This sequence belongs to the perilipin family. In terms of assembly, homooligomer. Interacts with PNPLA2; prevents interaction of PNPLA2 with ABHD5. Interacts with ABHD5; targets ABHD5 to lipid droplets and promotes interaction of ABHD5 with PNPLA2. Interacts with LIPE. In terms of processing, phosphorylated by PKA. Phosphorylated on serine in skeletal muscle at rest or upon lipolytic stimulation. Expressed in skeletal muscle, liver, heart and kidney.

It localises to the lipid droplet. It is found in the cytoplasm. The protein localises to the mitochondrion. Its function is as follows. Lipid droplet-associated protein that maintains the balance between lipogenesis and lipolysis and also regulates fatty acid oxidation in oxidative tissues. Recruits mitochondria to the surface of lipid droplets and is involved in lipid droplet homeostasis by regulating both the storage of fatty acids in the form of triglycerides and the release of fatty acids for mitochondrial fatty acid oxidation. In lipid droplet triacylglycerol hydrolysis, plays a role as a scaffolding protein for three major key lipolytic players: ABHD5, PNPLA2 and LIPE. Reduces the triacylglycerol hydrolase activity of PNPLA2 by recruiting and sequestering PNPLA2 to lipid droplets. Phosphorylation by PKA enables lipolysis probably by promoting release of ABHD5 from the perilipin scaffold and by facilitating interaction of ABHD5 with PNPLA2. Also increases lipolysis through interaction with LIPE and upon PKA-mediated phosphorylation of LIPE. This chain is Perilipin-5 (PLIN5), found in Homo sapiens (Human).